A 134-amino-acid chain; its full sequence is (R)-specific enoyl-CoA hydratase (134 aa).

Positions 5-119 (SLEVGQKARL…ATLTTRIFTQ (115 aa)) constitute a MaoC-like domain. A (3R)-3-hydroxyacyl-CoA is bound by residues 32-37 (DFNPLH), Gly55, and Phe84.

Homodimer.

The enzyme catalyses a (3R)-3-hydroxyacyl-CoA = a (2E)-enoyl-CoA + H2O. Its function is as follows. Catalyzes the hydration of trans-2-enoyl-CoA with a chain-length of 4-6 carbon atoms, forming the corresponding (3R)-3-hydroxyacyl-CoA. The polypeptide is (R)-specific enoyl-CoA hydratase (phaJ) (Aeromonas caviae (Aeromonas punctata)).